We begin with the raw amino-acid sequence, 536 residues long: Lysosomal acid glucosylceramidase (536 aa).

The first 39 residues, 1–39 (MELSSPSREEYPMPRGRVGIMAASLMGLLLLHTVSWVSG), serve as a signal peptide directing secretion. 2 disulfide bridges follow: C43/C55 and C57/C62. Residues N58, N98, N185, and N208 are each glycosylated (N-linked (GlcNAc...) asparagine). Catalysis depends on E274, which acts as the Proton donor. N309 carries an N-linked (GlcNAc...) asparagine glycan. The active-site Nucleophile is the E379. N501 carries N-linked (GlcNAc...) asparagine glycosylation.

It belongs to the glycosyl hydrolase 30 family. Interacts with saposin-C. Interacts with SCARB2. Interacts with TCP1. Interacts with GRN; this interaction prevents aggregation of GBA1-SCARB2 complex via interaction with HSPA1A upon stress.

Its subcellular location is the lysosome membrane. It catalyses the reaction a beta-D-glucosyl-(1&lt;-&gt;1')-N-acylsphing-4-enine + H2O = an N-acylsphing-4-enine + D-glucose. The enzyme catalyses a beta-D-galactosyl-(1&lt;-&gt;1')-N-acylsphing-4-enine + H2O = an N-acylsphing-4-enine + D-galactose. The catalysed reaction is cholesteryl 3-beta-D-glucoside + H2O = cholesterol + D-glucose. It carries out the reaction a beta-D-glucosyl-(1&lt;-&gt;1')-N-acylsphing-4-enine + cholesterol = cholesteryl 3-beta-D-glucoside + an N-acylsphing-4-enine. It catalyses the reaction beta-D-glucosyl-N-(9Z-octadecenoyl)-sphing-4E-enine + cholesterol = N-(9Z-octadecenoyl)-sphing-4-enine + cholesteryl 3-beta-D-glucoside. The enzyme catalyses beta-D-glucosyl-N-octanoylsphing-4E-enine + cholesterol = N-octanoylsphing-4-enine + cholesteryl 3-beta-D-glucoside. The catalysed reaction is beta-D-glucosyl-N-dodecanoylsphing-4-enine + cholesterol = N-dodecanoylsphing-4-enine + cholesteryl 3-beta-D-glucoside. It carries out the reaction beta-D-glucosyl-(1&lt;-&gt;1)-N-octadecanoylsphing-4-enine + cholesterol = N-octadecanoylsphing-4-enine + cholesteryl 3-beta-D-glucoside. It catalyses the reaction beta-D-glucosyl-(1&lt;-&gt;1')-N-(15Z-tetracosenoyl)-sphing-4-enine + cholesterol = N-(15Z-tetracosenoyl)-sphing-4-enine + cholesteryl 3-beta-D-glucoside. The enzyme catalyses a beta-D-galactosyl-(1&lt;-&gt;1')-N-acylsphing-4-enine + cholesterol = cholesteryl 3-beta-D-galactoside + an N-acylsphing-4-enine. The catalysed reaction is 1-(beta-D-galactosyl)-N-dodecanoylsphing-4-enine + cholesterol = cholesteryl 3-beta-D-galactoside + N-dodecanoylsphing-4-enine. It carries out the reaction a beta-D-xylosyl-(1&lt;-&gt;1')-N-acylsphing-4-enine + cholesterol = cholesteryl 3-beta-D-xyloside + an N-acylsphing-4-enine. It catalyses the reaction beta-D-xylosyl-(1&lt;-&gt;1')-N-(9Z-octadecenoyl)-sphing-4-enine + cholesterol = cholesteryl 3-beta-D-xyloside + N-(9Z-octadecenoyl)-sphing-4-enine. It functions in the pathway steroid metabolism; cholesterol metabolism. The protein operates within sphingolipid metabolism. Glucosylceramidase that catalyzes, within the lysosomal compartment, the hydrolysis of glucosylceramides/GlcCers (such as beta-D-glucosyl-(1&lt;-&gt;1')-N-acylsphing-4-enine) into free ceramides (such as N-acylsphing-4-enine) and glucose. Plays a central role in the degradation of complex lipids and the turnover of cellular membranes. Through the production of ceramides, participates in the PKC-activated salvage pathway of ceramide formation. Catalyzes the glucosylation of cholesterol, through a transglucosylation reaction where glucose is transferred from GlcCer to cholesterol. GlcCer containing mono-unsaturated fatty acids (such as beta-D-glucosyl-N-(9Z-octadecenoyl)-sphing-4-enine) are preferred as glucose donors for cholesterol glucosylation when compared with GlcCer containing same chain length of saturated fatty acids (such as beta-D-glucosyl-N-octadecanoyl-sphing-4-enine). Under specific conditions, may alternatively catalyze the reverse reaction, transferring glucose from cholesteryl 3-beta-D-glucoside to ceramide. Can also hydrolyze cholesteryl 3-beta-D-glucoside producing glucose and cholesterol. Catalyzes the hydrolysis of galactosylceramides/GalCers (such as beta-D-galactosyl-(1&lt;-&gt;1')-N-acylsphing-4-enine), as well as the transfer of galactose between GalCers and cholesterol in vitro, but with lower activity than with GlcCers. Contrary to GlcCer and GalCer, xylosylceramide/XylCer (such as beta-D-xyosyl-(1&lt;-&gt;1')-N-acylsphing-4-enine) is not a good substrate for hydrolysis, however it is a good xylose donor for transxylosylation activity to form cholesteryl 3-beta-D-xyloside. The protein is Lysosomal acid glucosylceramidase (GBA1) of Bos taurus (Bovine).